We begin with the raw amino-acid sequence, 61 residues long: Early 3 Conserved Region 1-alpha protein (61 aa).

The Lumenal portion of the chain corresponds to 1 to 14; it reads MSNSSNSTSLSNFS. 3 N-linked (GlcNAc...) asparagine; by host glycosylation sites follow: asparagine 3, asparagine 6, and asparagine 12. A helical transmembrane segment spans residues 15–35; it reads GIGVGVILTLVILFILILALL. The Cytoplasmic portion of the chain corresponds to 36–61; that stretch reads CLRVAACCTHVCTYCQLFKRWGQHPR.

It belongs to the adenoviridae E3-CR1 family. In terms of assembly, interacts with E3 RID alpha and E3 RID beta. Only 1 of 3 three potential glycosylation sites is glycosylated. Oligosaccharides are not processed from high mannose to the complex type because the protein is retained in the endoplasmic reticulum.

Its subcellular location is the host endoplasmic reticulum membrane. The protein resides in the host cell membrane. Its function is as follows. Prevents infected cell apoptosis induced by the host immune system. May act by down-regulating host TRAIL receptors. May act in complex with E3 RID alpha and beta. May play a role on cellular apoptosis regulation in the ER. The protein is Early 3 Conserved Region 1-alpha protein of Human adenovirus C serotype 2 (HAdV-2).